Reading from the N-terminus, the 258-residue chain is Probable N-acetylglucosaminyl-phosphatidylinositol de-N-acetylase (258 aa).

The tract at residues 147-170 is disordered; the sequence is KSSSTTTTSTTSSSSSSSSLSNRT. Residues 148 to 170 are compositionally biased toward low complexity; the sequence is SSSTTTTSTTSSSSSSSSLSNRT.

The protein belongs to the PIGL family.

The protein localises to the endoplasmic reticulum membrane. The enzyme catalyses a 6-(N-acetyl-alpha-D-glucosaminyl)-1-(1,2-diacyl-sn-glycero-3-phospho)-1D-myo-inositol + H2O = a 6-(alpha-D-glucosaminyl)-1-(1,2-diacyl-sn-glycero-3-phospho)-1D-myo-inositol + acetate. Its pathway is glycolipid biosynthesis; glycosylphosphatidylinositol-anchor biosynthesis. In terms of biological role, involved in the second step of GPI biosynthesis. De-N-acetylation of N-acetylglucosaminyl-phosphatidylinositol. This chain is Probable N-acetylglucosaminyl-phosphatidylinositol de-N-acetylase (pigl), found in Dictyostelium discoideum (Social amoeba).